The primary structure comprises 391 residues: DNA replication and repair protein RecF (391 aa).

Position 30–37 (30–37 (GSNGQGKT)) interacts with ATP.

Belongs to the RecF family.

The protein localises to the cytoplasm. Its function is as follows. The RecF protein is involved in DNA metabolism; it is required for DNA replication and normal SOS inducibility. RecF binds preferentially to single-stranded, linear DNA. It also seems to bind ATP. The sequence is that of DNA replication and repair protein RecF from Saccharopolyspora erythraea (strain ATCC 11635 / DSM 40517 / JCM 4748 / NBRC 13426 / NCIMB 8594 / NRRL 2338).